Consider the following 370-residue polypeptide: GTPase Obg (370 aa).

The Obg domain maps to 1 to 159 (MKFIDEARIE…RMLRLELKVL (159 aa)). The OBG-type G domain maps to 160-334 (ADVGLLGMPN…LCYAIYDYLA (175 aa)). Residues 166–173 (GMPNAGKS), 191–195 (FTTLA), 213–216 (DIPG), 284–287 (NKLD), and 315–317 (SAL) each bind GTP. Mg(2+) is bound by residues serine 173 and threonine 193. The interval 344–370 (EEEDLATDVRFRDAPPADGGATPGGDA) is disordered.

This sequence belongs to the TRAFAC class OBG-HflX-like GTPase superfamily. OBG GTPase family. In terms of assembly, monomer. Mg(2+) serves as cofactor.

Its subcellular location is the cytoplasm. Its function is as follows. An essential GTPase which binds GTP, GDP and possibly (p)ppGpp with moderate affinity, with high nucleotide exchange rates and a fairly low GTP hydrolysis rate. Plays a role in control of the cell cycle, stress response, ribosome biogenesis and in those bacteria that undergo differentiation, in morphogenesis control. The protein is GTPase Obg of Burkholderia ambifaria (strain MC40-6).